We begin with the raw amino-acid sequence, 142 residues long: Group IIE secretory phospholipase A2 (142 aa).

Residues 1–19 (MKSPHVLVFLCLLVALVTG) form the signal peptide. The Ca(2+) site is built by Asp-41, Gly-43, Tyr-45, Gly-47, and Gly-49. 7 disulfide bridges follow: Cys-44–Cys-135, Cys-46–Cys-62, Cys-61–Cys-115, Cys-67–Cys-142, Cys-68–Cys-108, Cys-77–Cys-101, and Cys-95–Cys-106. His-65 is an active-site residue. Residue Asp-66 coordinates Ca(2+). Asp-109 is a catalytic residue. Residues Tyr-130 and Asn-132 each contribute to the Ca(2+) site.

The protein belongs to the phospholipase A2 family. It depends on Ca(2+) as a cofactor. As to expression, restricted to the brain, heart, lung, and placenta.

Its subcellular location is the secreted. It is found in the cytoplasm. It carries out the reaction a 1,2-diacyl-sn-glycero-3-phosphoethanolamine + H2O = a 1-acyl-sn-glycero-3-phosphoethanolamine + a fatty acid + H(+). The catalysed reaction is 1-hexadecanoyl-2-(9Z-octadecenoyl)-sn-glycero-3-phosphoethanolamine + H2O = 1-hexadecanoyl-sn-glycero-3-phosphoethanolamine + (9Z)-octadecenoate + H(+). It catalyses the reaction 1-hexadecanoyl-2-(9Z,12Z-octadecadienoyl)-sn-glycero-3-phosphoethanolamine + H2O = 1-hexadecanoyl-sn-glycero-3-phosphoethanolamine + (9Z,12Z)-octadecadienoate + H(+). The enzyme catalyses 1-hexadecanoyl-2-(5Z,8Z,11Z,14Z-eicosatetraenoyl)-sn-glycero-3-phosphoethanolamine + H2O = 1-hexadecanoyl-sn-glycero-3-phosphoethanolamine + (5Z,8Z,11Z,14Z)-eicosatetraenoate + H(+). It carries out the reaction 1,2-dihexadecanoyl-sn-glycero-3-phospho-(1'-sn-glycerol) + H2O = 1-hexadecanoyl-sn-glycero-3-phospho-(1'-sn-glycerol) + hexadecanoate + H(+). The catalysed reaction is 1-hexadecanoyl-2-(9Z-octadecenoyl)-sn-glycero-3-phosphoglycerol + H2O = 1-hexadecanoyl-sn-glycero-3-phosphoglycerol + (9Z)-octadecenoate + H(+). It catalyses the reaction a 1,2-diacyl-sn-glycero-3-phosphocholine + H2O = a 1-acyl-sn-glycero-3-phosphocholine + a fatty acid + H(+). The enzyme catalyses 1,2-dihexadecanoyl-sn-glycero-3-phosphocholine + H2O = 1-hexadecanoyl-sn-glycero-3-phosphocholine + hexadecanoate + H(+). It carries out the reaction 1-hexadecanoyl-2-(9Z-octadecenoyl)-sn-glycero-3-phosphocholine + H2O = 1-hexadecanoyl-sn-glycero-3-phosphocholine + (9Z)-octadecenoate + H(+). The catalysed reaction is 1-hexadecanoyl-2-(9Z,12Z-octadecadienoyl)-sn-glycero-3-phosphocholine + H2O = (9Z,12Z)-octadecadienoate + 1-hexadecanoyl-sn-glycero-3-phosphocholine + H(+). It catalyses the reaction 1-hexadecanoyl-2-(4Z,7Z,10Z,13Z,16Z,19Z-docosahexaenoyl)-sn-glycero-3-phosphocholine + H2O = (4Z,7Z,10Z,13Z,16Z,19Z)-docosahexaenoate + 1-hexadecanoyl-sn-glycero-3-phosphocholine + H(+). In terms of biological role, secretory calcium-dependent phospholipase A2 that primarily targets extracellular phospholipids. Hydrolyzes the ester bond of the fatty acyl group attached at sn-2 position of phospholipids (phospholipase A2 activity), releasing various unsaturated fatty acids including oleoate, linoleoate, arachidonate, docosahexaenoate and lysophosphatidylethanolamines in preference to lysophosphatidylcholines. In response to high-fat diet, hydrolyzes minor lipoprotein phospholipids including phosphatidylserines, phosphatidylinositols and phosphatidylglycerols, altering lipoprotein composition and fat storage in adipose tissue and liver. May act in an autocrine and paracrine manner. Contributes to lipid remodeling of cellular membranes and generation of lipid mediators involved in pathogen clearance. Cleaves sn-2 fatty acyl chains of phosphatidylglycerols and phosphatidylethanolamines, which are major components of membrane phospholipids in bacteria. Acts as a hair follicle phospholipase A2. Selectively releases lysophosphatidylethanolamines (LPE) and various unsaturated fatty acids in skin to regulate hair follicle homeostasis. May regulate the inflammatory response by releasing arachidonate, a precursor of prostaglandins and leukotrienes. Upon allergen exposure, may participate in allergic inflammatory response by enhancing leukotriene C4 synthesis and degranulation in mast cells. The protein is Group IIE secretory phospholipase A2 (PLA2G2E) of Homo sapiens (Human).